Here is a 121-residue protein sequence, read N- to C-terminus: Ribosome-binding factor A (121 aa).

The protein belongs to the RbfA family. Monomer. Binds 30S ribosomal subunits, but not 50S ribosomal subunits or 70S ribosomes.

Its subcellular location is the cytoplasm. In terms of biological role, one of several proteins that assist in the late maturation steps of the functional core of the 30S ribosomal subunit. Associates with free 30S ribosomal subunits (but not with 30S subunits that are part of 70S ribosomes or polysomes). Required for efficient processing of 16S rRNA. May interact with the 5'-terminal helix region of 16S rRNA. The sequence is that of Ribosome-binding factor A from Brevibacillus brevis (strain 47 / JCM 6285 / NBRC 100599).